Consider the following 249-residue polypeptide: Quinate/shikimate dehydrogenase (249 aa).

Residues lysine 32 and aspartate 68 each coordinate substrate. Residues 93–96, 116–119, lysine 166, 193–196, and glycine 216 contribute to the NAD(+) site; these read AGGA, NRRD, and CVYN.

It belongs to the shikimate dehydrogenase family. Homodimer.

The enzyme catalyses L-quinate + NAD(+) = 3-dehydroquinate + NADH + H(+). The catalysed reaction is L-quinate + NADP(+) = 3-dehydroquinate + NADPH + H(+). It carries out the reaction shikimate + NADP(+) = 3-dehydroshikimate + NADPH + H(+). It catalyses the reaction shikimate + NAD(+) = 3-dehydroshikimate + NADH + H(+). The protein operates within metabolic intermediate biosynthesis; chorismate biosynthesis; chorismate from D-erythrose 4-phosphate and phosphoenolpyruvate: step 4/7. In terms of biological role, the actual biological function of YdiB remains unclear, nor is it known whether 3-dehydroshikimate or quinate represents the natural substrate. Catalyzes the reversible NAD-dependent reduction of both 3-dehydroshikimate (DHSA) and 3-dehydroquinate to yield shikimate (SA) and quinate, respectively. It can use both NAD or NADP for catalysis, however it has higher catalytic efficiency with NAD. This is Quinate/shikimate dehydrogenase from Shigella flexneri serotype 5b (strain 8401).